The following is a 250-amino-acid chain: Eukaryotic translation initiation factor 4E (250 aa).

The segment at 1–72 (MTTNKDVECL…QQEENPENLI (72 aa)) is disordered. A compositionally biased stretch (low complexity) spans 25–39 (NVTSETTTTTNNTQN). Positions 40-62 (KETETTDNINKEETADKENKEEQ) are enriched in basic and acidic residues. MRNA contacts are provided by residues 96–97 (WV), 142–143 (WE), 193–198 (RKNGDK), and 239–241 (RSS).

It belongs to the eukaryotic initiation factor 4E family. EIF4F is a multi-subunit complex, the composition of which varies with external and internal environmental conditions. It is composed of at least eif4a, eif4e and eif4g.

In terms of biological role, recognizes and binds the 7-methylguanosine-containing mRNA cap during an early step in the initiation of protein synthesis and facilitates ribosome binding by inducing the unwinding of the mRNAs secondary structures. The protein is Eukaryotic translation initiation factor 4E (eif4e) of Dictyostelium discoideum (Social amoeba).